The chain runs to 739 residues: MTDTTSSTPFVEGRAEQRLNGAIARFNRWPSAPRTVLVVASCVLGAMLLLGIISAPLDLYSQCLFAAVCFLAVLVLRKIPGRLAILALVVLSLVASLRYMFWRLTSTLGFETWVDMFFGYGLVAAEFYALIVLIFGYVQTAWPLRRTPVWLKTEPEEWPTVDVFIPTYNEALSIVKLTIFAAQAMDWPKDKLRVHVLDDGRRDDFREFCRKVGVNYIRRDNNFHAKAGNLNEALKVTDGEYIALFDADHVPTRSFLQVSLGWFLKDPKLAMLQTPHFFFSPDPFEKNLDTFRAVPNEGELFYGLVQDGNDLWNATFFCGSCAVIRREPLLEIGGVAVETVTEDAHTALKLNRLGYNTAYLAIPQAAGLATESLSRHINQRIRWARGMAQIFRTDNPLLGKGLKWGQRICYANAMLHFFYGLPRLVFLTAPLAYLIFGAEIFHASALMIVAYVLPHLVHSSLTNSRIQGRFRHSFWNEVYETVLAWYILPPVLVALVNPKAGGFNVTDKGGIIDKQFFDWKLARPYLVLLAVNLIGLGFGIHQLIWGDASTAVTVAINLTWTLYNLIITSAAVAVASEARQVRSEPRVSAKLPVSIICADGRVLDGTTQDFSQNGFGLMLSDGHSITQGERVQLVLSRNGQDSLFDARVVFSKGAQIGAQFEALSLRQQSELVRLTFSRADTWAASWGAGQPDTPLAALREVGSIGIGGLFTLGRATLHELRLALSRTPTKPLDTLMDKP.

4 helical membrane passes run 36–55 (VLVV…IISA), 59–76 (LYSQ…VLVL), 83–101 (LAIL…RYMF), and 116–138 (MFFG…FGYV). The catalytic subdomain A stretch occupies residues 157-250 (EWPTVDVFIP…YIALFDADHV (94 aa)). D199 is an active-site residue. D246 and D248 together coordinate substrate. Residues 327–387 (EPLLEIGGVA…NQRIRWARGM (61 aa)) are catalytic subdomain B. D343 is a catalytic residue. The next 4 membrane-spanning stretches (helical) occupy residues 417–436 (FFYG…YLIF), 440–462 (IFHA…SSLT), 524–546 (PYLV…LIWG), and 551–573 (AVTV…AAVA). One can recognise a PilZ domain in the interval 580–677 (QVRSEPRVSA…QSELVRLTFS (98 aa)).

The protein belongs to the glycosyltransferase 2 family. Mg(2+) serves as cofactor.

The protein resides in the cell inner membrane. It catalyses the reaction [(1-&gt;4)-beta-D-glucosyl](n) + UDP-alpha-D-glucose = [(1-&gt;4)-beta-D-glucosyl](n+1) + UDP + H(+). It functions in the pathway glycan metabolism; bacterial cellulose biosynthesis. With respect to regulation, activated by bis-(3'-5') cyclic diguanylic acid (c-di-GMP). Catalytic subunit of cellulose synthase. It polymerizes uridine 5'-diphosphate glucose to cellulose, which is produced as an extracellular component responsible for the structural integrity and rigidity of self-supporting mats characteristic of the 'wrinkly spreader' phenotype. In Pseudomonas fluorescens (strain SBW25), this protein is Cellulose synthase catalytic subunit [UDP-forming] (bcsA).